The chain runs to 344 residues: F17d-G fimbrial adhesin (344 aa).

Residues 1–22 (MTNFYKVFLAVFILVCCNISQA) form the signal peptide. Positions 23-199 (AVSFIGSTEN…SLNPFTLNDT (177 aa)) are receptor-binding lectin domain. A carbohydrate contacts are provided by residues 65–66 (AN), 110–111 (DT), and 139–142 (STQG). A disulfide bridge links cysteine 75 with cysteine 132. Positions 200–344 (VTSCRLLTPS…GISTFTFSYQ (145 aa)) are fimbrillin-binding domain. The segment at 288-308 (LKFGPDSPVKGNENQWQLSTG) is disordered. A compositionally biased stretch (polar residues) spans 299–308 (NENQWQLSTG).

This sequence belongs to the fimbrial protein family.

It localises to the fimbrium. Essential fimbrial adhesion factor that mediates binding to N-acetylglucosamine-containing receptors in the host intestinal microvilli, leading to colonization of the intestinal tissue, and diarrhea or septicemia. Also confers adhesiveness to laminin and basement membranes. This is F17d-G fimbrial adhesin (f17dG) from Escherichia coli.